Here is a 252-residue protein sequence, read N- to C-terminus: MTSHAPDPVHQFEISRLINISVGNMDLSFTNVSFFIIATVVATSVFLFISSSSRGLVPTRMQSISEIAYEFVASTLRESCGVQGMQFFPLVFSLFTFILVANFIGLFPYFYTITSQIMITFSLAMLVILTVVGYGFRKHGIGFLKLFVPSGVPVVILPLVTMIEVISFFSRPISLSLRLFANMLAGHITLKVFSGFIVSMIELGIMGVGGSILPLIMTVAITALEFLVAFLQAYVFTVLTCMYLNDAVHPGH.

The next 6 helical transmembrane spans lie at 29–49 (FTNVSFFIIATVVATSVFLFI), 87–107 (FFPLVFSLFTFILVANFIGLF), 116–136 (QIMITFSLAMLVILTVVGYGF), 146–166 (LFVPSGVPVVILPLVTMIEVI), 183–205 (MLAGHITLKVFSGFIVSMIELGI), and 219–239 (VAITALEFLVAFLQAYVFTVL).

The protein belongs to the ATPase A chain family. F-type ATPases have 2 components, CF(1) - the catalytic core - and CF(0) - the membrane proton channel. CF(1) has five subunits: alpha(3), beta(3), gamma(1), delta(1), epsilon(1). CF(0) has three main subunits: a(1), b(2) and c(9-12). The alpha and beta chains form an alternating ring which encloses part of the gamma chain. CF(1) is attached to CF(0) by a central stalk formed by the gamma and epsilon chains, while a peripheral stalk is formed by the delta and b chains.

The protein localises to the cell inner membrane. In terms of biological role, key component of the proton channel; it plays a direct role in the translocation of protons across the membrane. This Bartonella quintana (strain Toulouse) (Rochalimaea quintana) protein is ATP synthase subunit a.